The primary structure comprises 524 residues: Thioredoxin reductase 2, mitochondrial (524 aa).

Residues 1–34 (MVAAMVAALRGPSRRFRPRTRALTRGTRGAASAA) constitute a mitochondrion transit peptide. 41–70 (DLLVIGGGSGGLACAKEAAQLGKKVAVADY) is an FAD binding site. Lys79 carries the N6-succinyllysine modification. Cys86 and Cys91 are disulfide-bonded. Lys175 and Lys329 each carry N6-succinyllysine. The Proton acceptor role is filled by His497. The cysteinyl-selenocysteine (Cys-Sec) cross-link spans 522–523 (CU). A non-standard amino acid (selenocysteine) is located at residue Sec523.

This sequence belongs to the class-I pyridine nucleotide-disulfide oxidoreductase family. As to quaternary structure, homodimer. FAD is required as a cofactor. In terms of tissue distribution, expressed in liver, heart, testis and kidney.

It localises to the mitochondrion. It catalyses the reaction [thioredoxin]-dithiol + NADP(+) = [thioredoxin]-disulfide + NADPH + H(+). In terms of biological role, involved in the control of reactive oxygen species levels and the regulation of mitochondrial redox homeostasis. Maintains thioredoxin in a reduced state. May play a role in redox-regulated cell signaling. This chain is Thioredoxin reductase 2, mitochondrial, found in Mus musculus (Mouse).